The sequence spans 338 residues: MYG1 protein YER156C (338 aa).

It belongs to the MYG1 family.

The sequence is that of MYG1 protein YER156C from Saccharomyces cerevisiae (strain ATCC 204508 / S288c) (Baker's yeast).